We begin with the raw amino-acid sequence, 115 residues long: U3-lycotoxin-Ls1g (115 aa).

The first 20 residues, 1–20, serve as a signal peptide directing secretion; sequence MKFVLLFGVFLVTLFSYSSA. Positions 21–44 are excised as a propeptide; that stretch reads EMLDDFDQADEDELLSLIEKEEAR. 4 disulfide bridges follow: C48-C63, C55-C72, C62-C87, and C74-C85.

It belongs to the neurotoxin 19 (CSTX) family. 01 subfamily. Expressed by the venom gland.

The protein resides in the secreted. This Lycosa singoriensis (Wolf spider) protein is U3-lycotoxin-Ls1g.